Consider the following 265-residue polypeptide: Ribosomal RNA small subunit methyltransferase A (265 aa).

S-adenosyl-L-methionine-binding residues include His17, Leu19, Gly44, Glu65, Asp90, and Asn112.

It belongs to the class I-like SAM-binding methyltransferase superfamily. rRNA adenine N(6)-methyltransferase family. RsmA subfamily.

The protein resides in the cytoplasm. The enzyme catalyses adenosine(1518)/adenosine(1519) in 16S rRNA + 4 S-adenosyl-L-methionine = N(6)-dimethyladenosine(1518)/N(6)-dimethyladenosine(1519) in 16S rRNA + 4 S-adenosyl-L-homocysteine + 4 H(+). In terms of biological role, specifically dimethylates two adjacent adenosines (A1518 and A1519) in the loop of a conserved hairpin near the 3'-end of 16S rRNA in the 30S particle. May play a critical role in biogenesis of 30S subunits. The protein is Ribosomal RNA small subunit methyltransferase A of Xylella fastidiosa (strain 9a5c).